The following is a 230-amino-acid chain: 7-cyano-7-deazaguanine synthase (230 aa).

Position 9 to 19 (9 to 19) interacts with ATP; the sequence is YSGGLDSTTCL. Residues C190, C200, C203, and C206 each coordinate Zn(2+).

Belongs to the QueC family. It depends on Zn(2+) as a cofactor.

It catalyses the reaction 7-carboxy-7-deazaguanine + NH4(+) + ATP = 7-cyano-7-deazaguanine + ADP + phosphate + H2O + H(+). Its pathway is purine metabolism; 7-cyano-7-deazaguanine biosynthesis. Functionally, catalyzes the ATP-dependent conversion of 7-carboxy-7-deazaguanine (CDG) to 7-cyano-7-deazaguanine (preQ(0)). This Syntrophotalea carbinolica (strain DSM 2380 / NBRC 103641 / GraBd1) (Pelobacter carbinolicus) protein is 7-cyano-7-deazaguanine synthase.